The following is a 280-amino-acid chain: MTARIDAAFARCRAEGRAALVTYVMAGDPDPETSLKVLEALPKAGADIVEFGLPFTDPMADGPAIQAAGLRALKAGQDLRGTLALVRRFREGDDQTPVVLMGYYNPIHTYGVPHFLEDAQAAGIDGLIVVDLPPEEDEELCLPALEKGLAFIRLATPTTDEARLPAVLANTAGFVYYVSITGVTGTATPDFGRVSQAVSRITAHTNLPVVVGFGVKTGAHAAEIARGADGVVVGSALVDALARSLEPGDRAGSGTVEAVASLVRELAQGVRSAAKAPAGA.

Catalysis depends on proton acceptor residues glutamate 50 and aspartate 61.

Belongs to the TrpA family. Tetramer of two alpha and two beta chains.

The enzyme catalyses (1S,2R)-1-C-(indol-3-yl)glycerol 3-phosphate + L-serine = D-glyceraldehyde 3-phosphate + L-tryptophan + H2O. It participates in amino-acid biosynthesis; L-tryptophan biosynthesis; L-tryptophan from chorismate: step 5/5. The alpha subunit is responsible for the aldol cleavage of indoleglycerol phosphate to indole and glyceraldehyde 3-phosphate. In Methylorubrum extorquens (strain CM4 / NCIMB 13688) (Methylobacterium extorquens), this protein is Tryptophan synthase alpha chain.